Reading from the N-terminus, the 486-residue chain is NADH-quinone oxidoreductase subunit N (486 aa).

Transmembrane regions (helical) follow at residues 11 to 31, 44 to 64, 74 to 94, 103 to 123, 128 to 148, 163 to 183, 206 to 226, 238 to 258, 267 to 287, 300 to 320, 328 to 348, 371 to 391, 404 to 424, and 452 to 472; these read ALPE…DLFV, MLAL…YPVL, PIAS…MIYA, FLKG…CVMV, MLTL…LIAL, FVLG…VYGG, VSLG…AVPF, PTAV…VFVI, PAAV…LVVG, MLAY…LAAT, MFYA…LLAL, YALL…LVGF, VGLT…AFYY, and LVLG…NGLY.

Belongs to the complex I subunit 2 family. NDH-1 is composed of 14 different subunits. Subunits NuoA, H, J, K, L, M, N constitute the membrane sector of the complex.

It is found in the cell inner membrane. The catalysed reaction is a quinone + NADH + 5 H(+)(in) = a quinol + NAD(+) + 4 H(+)(out). NDH-1 shuttles electrons from NADH, via FMN and iron-sulfur (Fe-S) centers, to quinones in the respiratory chain. The immediate electron acceptor for the enzyme in this species is believed to be ubiquinone. Couples the redox reaction to proton translocation (for every two electrons transferred, four hydrogen ions are translocated across the cytoplasmic membrane), and thus conserves the redox energy in a proton gradient. This is NADH-quinone oxidoreductase subunit N from Laribacter hongkongensis (strain HLHK9).